A 228-amino-acid polypeptide reads, in one-letter code: L-ribulose-5-phosphate 4-epimerase UlaF (228 aa).

Substrate-binding positions include 26–27, 43–44, and 72–73; these read GN, SG, and SS. Zn(2+) is bound by residues D74, H93, and H95. D118 (proton donor/acceptor) is an active-site residue. H167 is a binding site for Zn(2+). Y225 (proton donor/acceptor) is an active-site residue.

Belongs to the aldolase class II family. AraD/FucA subfamily. Zn(2+) serves as cofactor.

The enzyme catalyses L-ribulose 5-phosphate = D-xylulose 5-phosphate. Its pathway is cofactor degradation; L-ascorbate degradation; D-xylulose 5-phosphate from L-ascorbate: step 4/4. Catalyzes the isomerization of L-ribulose 5-phosphate to D-xylulose 5-phosphate. Is involved in the anaerobic L-ascorbate utilization. The protein is L-ribulose-5-phosphate 4-epimerase UlaF of Shigella dysenteriae serotype 1 (strain Sd197).